We begin with the raw amino-acid sequence, 642 residues long: tRNA uridine 5-carboxymethylaminomethyl modification enzyme MnmG (642 aa).

24-29 (GGGHAG) contacts FAD. An NAD(+)-binding site is contributed by 284–298 (GPRYCPSIEDKIHRF).

Belongs to the MnmG family. As to quaternary structure, homodimer. Heterotetramer of two MnmE and two MnmG subunits. The cofactor is FAD.

It localises to the cytoplasm. Its function is as follows. NAD-binding protein involved in the addition of a carboxymethylaminomethyl (cmnm) group at the wobble position (U34) of certain tRNAs, forming tRNA-cmnm(5)s(2)U34. In Psychrobacter sp. (strain PRwf-1), this protein is tRNA uridine 5-carboxymethylaminomethyl modification enzyme MnmG.